Reading from the N-terminus, the 437-residue chain is MPLNFRDRFNVPVLKNGEEVAYLVGNSLGLMPHKTRDYVNQEMDAWSQLGVKGHFVSGKEDLGQDVHQGPWYSCDEPLHGLVGPILGASEDEVAIMNTLTSNIHSLFSAFYKPTAKRSKILFEAKAFPSDTYAMEAQARLHNLDPSEALIKLAPKDGLHTLSDDDIIKVIEEQGDEIAVVFFSGIQFYTGQLFDIPRITAAAKAKGCVVGWDLAHAAGNVPLKLHDWNVDFAVFCTYKYMNSGPGGIGGLFVHDKYADDQRPRLAGWWGNNAETRFKMLDEFDPIRGARGYKQSNPSVLCVLALRASLELFKEAGGIEKLRERSIELTNRLLKGLLASPHYIAPENIEIFGNSGKAWFTIITPQAEHQRGAQLSLLFGPDGTMKKVFDYLDDHGVLGDERNPDVIRLAPAPLYNNERDVDLAIKLINDSINLINGSA.

Pyridoxal 5'-phosphate contacts are provided by residues Leu99, Thr100, 127–130, Ser183, Asp212, His215, and Tyr237; that span reads FPSD. Lys238 is modified (N6-(pyridoxal phosphate)lysine). Residues Trp267 and Asn295 each contribute to the pyridoxal 5'-phosphate site.

The protein belongs to the kynureninase family. As to quaternary structure, homodimer. Requires pyridoxal 5'-phosphate as cofactor.

The protein resides in the cytoplasm. It carries out the reaction L-kynurenine + H2O = anthranilate + L-alanine + H(+). It catalyses the reaction 3-hydroxy-L-kynurenine + H2O = 3-hydroxyanthranilate + L-alanine + H(+). It participates in amino-acid degradation; L-kynurenine degradation; L-alanine and anthranilate from L-kynurenine: step 1/1. The protein operates within cofactor biosynthesis; NAD(+) biosynthesis; quinolinate from L-kynurenine: step 2/3. In terms of biological role, catalyzes the cleavage of L-kynurenine (L-Kyn) and L-3-hydroxykynurenine (L-3OHKyn) into anthranilic acid (AA) and 3-hydroxyanthranilic acid (3-OHAA), respectively. The polypeptide is Kynureninase (Yarrowia lipolytica (strain CLIB 122 / E 150) (Yeast)).